The primary structure comprises 238 residues: Uridylate kinase (238 aa).

12–15 provides a ligand contact to ATP; it reads KLSG. Residue G54 coordinates UMP. ATP contacts are provided by G55 and R59. UMP is bound by residues D74 and 135 to 142; that span reads TGNPFFTT. 3 residues coordinate ATP: T162, Y168, and D171.

The protein belongs to the UMP kinase family. Homohexamer.

Its subcellular location is the cytoplasm. The enzyme catalyses UMP + ATP = UDP + ADP. The protein operates within pyrimidine metabolism; CTP biosynthesis via de novo pathway; UDP from UMP (UMPK route): step 1/1. Inhibited by UTP. Its function is as follows. Catalyzes the reversible phosphorylation of UMP to UDP. This Aromatoleum aromaticum (strain DSM 19018 / LMG 30748 / EbN1) (Azoarcus sp. (strain EbN1)) protein is Uridylate kinase.